Reading from the N-terminus, the 345-residue chain is Dihydroorotase (345 aa).

Positions 13 and 15 each coordinate Zn(2+). Substrate contacts are provided by residues 15-17 (HLR) and asparagine 41. Zn(2+)-binding residues include lysine 99, histidine 136, and histidine 174. Residue lysine 99 is modified to N6-carboxylysine. Residue histidine 136 coordinates substrate. Position 219 (leucine 219) interacts with substrate. Aspartate 247 provides a ligand contact to Zn(2+). Aspartate 247 is an active-site residue. Substrate is bound by residues histidine 251 and alanine 263.

This sequence belongs to the metallo-dependent hydrolases superfamily. DHOase family. Class II DHOase subfamily. Homodimer. The cofactor is Zn(2+).

It catalyses the reaction (S)-dihydroorotate + H2O = N-carbamoyl-L-aspartate + H(+). It functions in the pathway pyrimidine metabolism; UMP biosynthesis via de novo pathway; (S)-dihydroorotate from bicarbonate: step 3/3. In terms of biological role, catalyzes the reversible cyclization of carbamoyl aspartate to dihydroorotate. The chain is Dihydroorotase from Hahella chejuensis (strain KCTC 2396).